The following is a 58-amino-acid chain: Small ribosomal subunit protein bS21 (58 aa).

A disordered region spans residues Ser25–Phe58. Positions Glu32–Ser43 are enriched in basic and acidic residues. Over residues Val44 to Phe58 the composition is skewed to basic residues.

The protein belongs to the bacterial ribosomal protein bS21 family.

This chain is Small ribosomal subunit protein bS21, found in Oceanobacillus iheyensis (strain DSM 14371 / CIP 107618 / JCM 11309 / KCTC 3954 / HTE831).